Here is a 944-residue protein sequence, read N- to C-terminus: Lactoferrin-binding protein A (944 aa).

The signal sequence occupies residues 1–27 (MNKKHGFSLTLTALAIAAAFPSYAANP). Positions 52–178 (RRSKEATGLG…LGGAVAFRTK (127 aa)) constitute a TBDR plug domain. In terms of domain architecture, TBDR beta-barrel spans 189–944 (SWGIQAKTAY…NFSLALEMKF (756 aa)). A TonB C-terminal box motif is present at residues 927–944 (GRYAAPGRNFSLALEMKF).

Belongs to the TonB-dependent receptor family.

Its subcellular location is the cell outer membrane. Its function is as follows. Unknown. May be an iron-siderophore receptor. The chain is Lactoferrin-binding protein A (lbpA) from Neisseria meningitidis serogroup A / serotype 4A (strain DSM 15465 / Z2491).